We begin with the raw amino-acid sequence, 433 residues long: Xylose isomerase (433 aa).

Residues histidine 99 and aspartate 102 contribute to the active site. Mg(2+)-binding residues include glutamate 230, glutamate 266, histidine 269, aspartate 294, aspartate 305, aspartate 307, and aspartate 337.

It belongs to the xylose isomerase family. As to quaternary structure, homotetramer. The cofactor is Mg(2+).

It localises to the cytoplasm. It carries out the reaction alpha-D-xylose = alpha-D-xylulofuranose. This chain is Xylose isomerase, found in Cereibacter sphaeroides (strain ATCC 17029 / ATH 2.4.9) (Rhodobacter sphaeroides).